Reading from the N-terminus, the 312-residue chain is Malate dehydrogenase (312 aa).

Residues 7–13 (GASGGIG) and D34 contribute to the NAD(+) site. Substrate contacts are provided by R81 and R87. NAD(+) is bound by residues N94 and 117–119 (ITN). The substrate site is built by N119 and R153. The active-site Proton acceptor is the H177. Residue M227 coordinates NAD(+).

It belongs to the LDH/MDH superfamily. MDH type 1 family. As to quaternary structure, homodimer.

The catalysed reaction is (S)-malate + NAD(+) = oxaloacetate + NADH + H(+). Catalyzes the reversible oxidation of malate to oxaloacetate. In Actinobacillus succinogenes (strain ATCC 55618 / DSM 22257 / CCUG 43843 / 130Z), this protein is Malate dehydrogenase.